Reading from the N-terminus, the 457-residue chain is MTLLQFAGLLLVWLVCGGFILTLTWREFRRVRFNFNVFFSMLFLLTFFFGFPLTCILVFGFDVEVVPAEYLLQALLSAGCFYAIYYVTYKTRLRTRHRAPSRPAFTINRIEAHLSWMIMALVALITVSVFFLHNGFLLFKLQKYSQIFSADVSGVALKRFFYFFIPAMLVVYFLQQNMRSWLLFLVGTVAFGLLTYAIVGGTRANIIIAFALFLFIGIIRGWITLWMLALAGVGAIVAMFWLALKRYNLDVSGSQAFYTFLYLTRDTFSPWENLGLLLQNYDRIDFQGLAPVWRDFYVFIPSWLWHERPSVVLNSANYFTWEVLDNHSGLAISPTLIGSLVVMGGALFIMLGAVMVGLIIKWFDWLYEKGRQEENPYKAAILQSFCFGAVFNMIVLAREGLDAFVSRVVFFCVIFAACVLVAKLLYWLLDSAGLVRARKGPACARSSLKHCFVGNDS.

11 helical membrane-spanning segments follow: residues 3-23 (LLQFAGLLLVWLVCGGFILTL), 41-61 (MLFLLTFFFGFPLTCILVFGF), 65-85 (VVPAEYLLQALLSAGCFYAIY), 118-138 (IMALVALITVSVFFLHNGFLL), 154-174 (GVALKRFFYFFIPAMLVVYFL), 181-201 (WLLFLVGTVAFGLLTYAIVGG), 206-226 (IIIAFALFLFIGIIRGWITLW), 227-247 (MLALAGVGAIVAMFWLALKRY), 340-360 (LVVMGGALFIMLGAVMVGLII), 377-397 (YKAAILQSFCFGAVFNMIVLA), and 408-428 (VVFFCVIFAACVLVAKLLYWL).

The protein belongs to the WzyE family. Probably part of a complex composed of WzxE, WzyE and WzzE.

The protein localises to the cell inner membrane. The protein operates within bacterial outer membrane biogenesis; enterobacterial common antigen biosynthesis. Functionally, probably involved in the polymerization of enterobacterial common antigen (ECA) trisaccharide repeat units. This chain is Probable ECA polymerase, found in Erwinia tasmaniensis (strain DSM 17950 / CFBP 7177 / CIP 109463 / NCPPB 4357 / Et1/99).